A 403-amino-acid chain; its full sequence is SEC14-like protein 2 (403 aa).

Lys-51 is modified (N6-succinyllysine). The region spanning 76 to 249 (PPEVIQQYLS…EYGGTMTDPD (174 aa)) is the CRAL-TRIO domain. Residues Lys-253 and Lys-257 each carry the N6-succinyllysine modification. Residues 275 to 383 (KQQYEHSVQI…AKKVNFTVEV (109 aa)) enclose the GOLD domain. Position 393 is an N6-succinyllysine (Lys-393).

Monomer. Widely expressed. Strong expression in liver, brain and prostate.

It localises to the cytoplasm. Its subcellular location is the nucleus. Functionally, carrier protein. Binds to some hydrophobic molecules and promotes their transfer between the different cellular sites. Binds with high affinity to alpha-tocopherol. Also binds with a weaker affinity to other tocopherols and to tocotrienols. May have a transcriptional activatory activity via its association with alpha-tocopherol. Probably recognizes and binds some squalene structure, suggesting that it may regulate cholesterol biosynthesis by increasing the transfer of squalene to a metabolic active pool in the cell. The chain is SEC14-like protein 2 (SEC14L2) from Homo sapiens (Human).